The sequence spans 625 residues: Protein LEO1 homolog (625 aa).

Disordered stretches follow at residues 1-214 and 415-625; these read MVKG…DMVL and EREK…SDED. Acidic residues-rich tracts occupy residues 40-55 and 63-80; these read DEAE…GEAE and EAES…PGES. Composition is skewed to basic and acidic residues over residues 97-113, 121-137, and 182-197; these read SEAR…EHGG, QEVV…KHYE, and EYVR…RSPI. A Phosphoserine modification is found at Ser203. The span at 415–425 shows a compositional bias: basic and acidic residues; the sequence is EREKEKREKAE. Residues 415 to 539 adopt a coiled-coil conformation; sequence EREKEKREKA…ETEEEEEEKS (125 aa). Over residues 426-436 the composition is skewed to polar residues; the sequence is SQNLKASTKLS. The span at 471–491 shows a compositional bias: basic and acidic residues; it reads YRSNRGYEEDLEAEAQRERRI. Residues 492-501 are compositionally biased toward basic residues; that stretch reads LNAKKSHKGI. The segment covering 523–537 has biased composition (acidic residues); sequence EREESEYETEEEEEE. Basic and acidic residues predominate over residues 538–547; the sequence is KSPARGRGKD. A phosphoserine mark is found at Ser548, Ser570, Ser600, Ser605, and Ser622. A compositionally biased stretch (acidic residues) spans 548–561; sequence SEDEYEEDAEEDEE.

This sequence belongs to the LEO1 family. Component of the nuclear PAF1 complex (PAF1C), which consists of VIP2/ELF7/PAF1, VIP3/SKI8/WDR61, VIP4/LEO1, VIP5/RTF1, VIP6/ELF8/CTR9 and CDC73. Interacts with VIP3 and VIP6. In terms of tissue distribution, expressed in roots, shoot apices, stems, cauline leaves, inflorescence apices and flowers.

The protein resides in the nucleus. Component of the PAF1 complex (PAF1C) which is involved in histone modifications such as methylation on histone H3 'Lys-4' (H3K4me3). Involved in regulation of flowering time. Required for the expression of the flowering repressor and MADS box gene FLC. Involved in the control of seed dormancy and germination. The polypeptide is Protein LEO1 homolog (Arabidopsis thaliana (Mouse-ear cress)).